The chain runs to 109 residues: Ycf20-like protein (109 aa).

It belongs to the ycf20 family.

The sequence is that of Ycf20-like protein from Synechocystis sp. (strain ATCC 27184 / PCC 6803 / Kazusa).